A 102-amino-acid chain; its full sequence is MIPGEIITQIGEIELNSGRSTIQVIVANTGDRPIQIGSHFHFYEVNSALEFEREPTKGMRLNIPAGTAVRFEPGDEKEVELVAIAGSREIYGFNSLVNQKLE.

Belongs to the urease beta subunit family. Heterotrimer of UreA (gamma), UreB (beta) and UreC (alpha) subunits. Three heterotrimers associate to form the active enzyme.

The protein localises to the cytoplasm. The enzyme catalyses urea + 2 H2O + H(+) = hydrogencarbonate + 2 NH4(+). It functions in the pathway nitrogen metabolism; urea degradation; CO(2) and NH(3) from urea (urease route): step 1/1. The chain is Urease subunit beta from Trichodesmium erythraeum (strain IMS101).